A 217-amino-acid chain; its full sequence is Aprataxin-like protein (217 aa).

The region spanning 6-139 (ALKNYVTSPE…HIHVISKDFH (134 aa)) is the HIT domain. Interaction with DNA regions lie at residues 34-38 (DSFPK), 121-132 (HSVPSMANLHIH), and 144-148 (KNKKH). The Nucleophile role is filled by H130. 4 residues coordinate Zn(2+): C188, C191, H205, and E209.

The protein resides in the nucleus. Its subcellular location is the cytoplasm. It catalyses the reaction a 5'-end adenosine-5'-diphospho-5'-2'-deoxyribonucleoside-DNA + H2O = a 5'-end 5'-phospho-2'-deoxyribonucleoside-DNA + AMP + 2 H(+). The catalysed reaction is a 5'-end adenosine-5'-diphospho-5'-ribonucleoside-2'-deoxyribonucleotide-DNA + H2O = a 5'-end 5'-phospho-ribonucleoside-2'-deoxyribonucleotide-DNA + AMP + 2 H(+). The enzyme catalyses a 3'-end 2'-deoxyribonucleotide-3'-diphospho-5'-guanosine-DNA + H2O = a 3'-end 2'-deoxyribonucleotide 3'-phosphate-DNA + GMP + 2 H(+). In terms of biological role, DNA-binding protein involved in single-strand DNA break repair, double-strand DNA break repair and base excision repair. Resolves abortive DNA ligation intermediates formed either at base excision sites, or when DNA ligases attempt to repair non-ligatable breaks induced by reactive oxygen species. Catalyzes the release of adenylate groups covalently linked to 5'-phosphate termini, resulting in the production of 5'-phosphate termini that can be efficiently rejoined. Likewise, catalyzes the release of 3'-linked guanosine (DNAppG) and inosine (DNAppI) from DNA, but has higher specific activity with 5'-linked adenosine (AppDNA). The protein is Aprataxin-like protein (HNT3) of Saccharomyces cerevisiae (strain ATCC 204508 / S288c) (Baker's yeast).